Reading from the N-terminus, the 298-residue chain is Phosphatidylserine decarboxylase proenzyme (298 aa).

Residues D113, H169, and S256 each act as charge relay system; for autoendoproteolytic cleavage activity in the active site. S256 functions as the Schiff-base intermediate with substrate; via pyruvic acid; for decarboxylase activity in the catalytic mechanism. S256 is modified (pyruvic acid (Ser); by autocatalysis).

This sequence belongs to the phosphatidylserine decarboxylase family. PSD-B subfamily. Prokaryotic type II sub-subfamily. As to quaternary structure, heterodimer of a large membrane-associated beta subunit and a small pyruvoyl-containing alpha subunit. Pyruvate serves as cofactor. Post-translationally, is synthesized initially as an inactive proenzyme. Formation of the active enzyme involves a self-maturation process in which the active site pyruvoyl group is generated from an internal serine residue via an autocatalytic post-translational modification. Two non-identical subunits are generated from the proenzyme in this reaction, and the pyruvate is formed at the N-terminus of the alpha chain, which is derived from the carboxyl end of the proenzyme. The autoendoproteolytic cleavage occurs by a canonical serine protease mechanism, in which the side chain hydroxyl group of the serine supplies its oxygen atom to form the C-terminus of the beta chain, while the remainder of the serine residue undergoes an oxidative deamination to produce ammonia and the pyruvoyl prosthetic group on the alpha chain. During this reaction, the Ser that is part of the protease active site of the proenzyme becomes the pyruvoyl prosthetic group, which constitutes an essential element of the active site of the mature decarboxylase.

The protein resides in the cell membrane. The enzyme catalyses a 1,2-diacyl-sn-glycero-3-phospho-L-serine + H(+) = a 1,2-diacyl-sn-glycero-3-phosphoethanolamine + CO2. The protein operates within phospholipid metabolism; phosphatidylethanolamine biosynthesis; phosphatidylethanolamine from CDP-diacylglycerol: step 2/2. In terms of biological role, catalyzes the formation of phosphatidylethanolamine (PtdEtn) from phosphatidylserine (PtdSer). The protein is Phosphatidylserine decarboxylase proenzyme of Desulfitobacterium hafniense (strain DSM 10664 / DCB-2).